We begin with the raw amino-acid sequence, 902 residues long: Potassium/sodium hyperpolarization-activated cyclic nucleotide-gated channel 1 (902 aa).

The disordered stretch occupies residues 1–75 (MEGGGKPNSA…PAGSFEDAEG (75 aa)). At 1–131 (MEGGGKPNSA…WIIHPYSDFR (131 aa)) the chain is on the cytoplasmic side. A helical transmembrane segment spans residues 132-153 (FYWDLIMLIMMVGNLVIIPVGI). Over 154–162 (TFFTEQTTT) the chain is Extracellular. A helical transmembrane segment spans residues 163-183 (PWIIFNVASDTVFLLDLIMNF). At 184-204 (RTGTVNEDSSEIILDPKVIKM) the chain is on the cytoplasmic side. A helical membrane pass occupies residues 205–225 (NYLKSWFVVDFISSIPVDYIF). At 226–249 (LIVEKGMDSEVYKTARALRIVRFT) the chain is on the extracellular side. The helical; Voltage-sensor transmembrane segment at 250 to 270 (KILSLLRLLRLSRLIRYIHQW) threads the bilayer. Residues 271-284 (EEIFHMTYDLASAV) lie on the Cytoplasmic side of the membrane. A helical membrane pass occupies residues 285–307 (VRIFNLIGMMLLLCHWDGCLQFL). Topologically, residues 308 to 333 (VPLLQDFPPDCWVSLNEMVNDSWGKQ) are extracellular. N327 is a glycosylation site (N-linked (GlcNAc...) asparagine). Positions 334–355 (YSYALFKAMSHMLCIGYGAQAP) form an intramembrane region, pore-forming. The Selectivity filter signature appears at 347–351 (CIGYG). The Extracellular segment spans residues 356 to 360 (VSMSD). Residues 361 to 381 (LWITMLSMIVGATCYAMFVGH) traverse the membrane as a helical segment. The Cytoplasmic portion of the chain corresponds to 382–902 (ATALIQSLDS…AEKPRFASNL (521 aa)). The 3',5'-cyclic AMP site is built by G528, E529, C531, R538, T539, R579, and R582. Disordered stretches follow at residues 634-681 (TALN…QPSA), 713-824 (ASQL…VGES), and 858-902 (MSSG…ASNL). Composition is skewed to low complexity over residues 639–680 (TSST…PQPS), 720–736 (QQPQ…QTQP), and 744–769 (QPQQ…QQPQ). Residues 770–793 (TPGSSTPKNEVHKSTQALHNTNLT) show a composition bias toward polar residues. Over residues 867–877 (RGVPPAPPPPA) the composition is skewed to pro residues. Residues 889–902 (KDPDAEKPRFASNL) are compositionally biased toward basic and acidic residues.

This sequence belongs to the potassium channel HCN family. As to quaternary structure, homotetramer. Heterotetramer with HCN2. The potassium channel is composed of a homo- or heterotetrameric complex of pore-forming subunits. Interacts with KCNE2. Interacts with the SH3 domain of CSK. In terms of tissue distribution, highly expressed in cerebral cortex, cerebellum, throughout the hippocampus, in medial habenula, anterior dorsal nucleus in the thalamus, tenia tecta, several nuclei of the general motor system and in optic nerve layer. Detected in a subset of elongated cells in taste buds.

The protein resides in the cell membrane. It carries out the reaction Na(+)(in) = Na(+)(out). The enzyme catalyses K(+)(in) = K(+)(out). With respect to regulation, activated by cAMP, and at 10-100 times higher concentrations, also by cGMP. cAMP binding promotes tetramerization and formation of an active channel. Compared to other family members, cAMP has less stimulatory effect on HCN1 because part of the molecules already contain bound cAMP and form homotetramers when cAMP levels are low, this inherent tetramerization in HCN1 results in a weaker response to increased cAMP. Functionally, hyperpolarization-activated ion channel that are permeable to sodium and potassium ions. Exhibits weak selectivity for potassium over sodium ions. Contributes to the native pacemaker currents in heart (If) and in neurons (Ih). Participates in cerebellar mechanisms of motor learning. May mediate responses to sour stimuli. The sequence is that of Potassium/sodium hyperpolarization-activated cyclic nucleotide-gated channel 1 (Hcn1) from Rattus norvegicus (Rat).